We begin with the raw amino-acid sequence, 868 residues long: Transcription factor pynR (868 aa).

Residues 11 to 37 constitute a DNA-binding region (zn(2)-C6 fungal-type); that stretch reads CTFCRTRKIACSGERICNACRSRSIEC. Disordered regions lie at residues 51-88, 662-683, 715-761, and 829-868; these read NKTT…TSAV, LSGS…LDLS, SGIP…ASDL, and GMGE…GMSN. 2 stretches are compositionally biased toward low complexity: residues 663-683 and 715-727; these read SGSR…LDLS and SGIP…SISH.

The protein localises to the nucleus. In terms of biological role, transcription factor that regulates the expression of the gene cluster that mediates the biosynthesis of pyranonigrins, a family of antioxidative compounds. This is Transcription factor pynR from Aspergillus niger (strain ATCC MYA-4892 / CBS 513.88 / FGSC A1513).